A 569-amino-acid chain; its full sequence is 63 kDa chaperonin, mitochondrial (569 aa).

Residues 1-29 constitute a mitochondrion transit peptide; it reads MFKMYRSPHITRNSFKYLKATNINSCRFY.

It belongs to the chaperonin (HSP60) family. As to quaternary structure, forms a single seven-member ring complex, in tight association with the p60 protein. In terms of tissue distribution, testis.

It is found in the mitochondrion. Its function is as follows. Implicated in mitochondrial protein import and macromolecular assembly. May facilitate the correct folding of imported proteins. May also prevent misfolding and promote the refolding and proper assembly of unfolded polypeptides generated under stress conditions in the mitochondrial matrix. This Heliothis virescens (Tobacco budworm moth) protein is 63 kDa chaperonin, mitochondrial.